Consider the following 237-residue polypeptide: Ribosomal RNA small subunit methyltransferase G (237 aa).

Residues Gly78, Phe83, 129-130, and Arg146 each bind S-adenosyl-L-methionine; that span reads AE.

It belongs to the methyltransferase superfamily. RNA methyltransferase RsmG family.

Its subcellular location is the cytoplasm. Specifically methylates the N7 position of a guanine in 16S rRNA. In Mesoplasma florum (strain ATCC 33453 / NBRC 100688 / NCTC 11704 / L1) (Acholeplasma florum), this protein is Ribosomal RNA small subunit methyltransferase G.